The sequence spans 697 residues: Polyribonucleotide nucleotidyltransferase (697 aa).

Positions 488 and 494 each coordinate Mg(2+). Positions 555 to 614 (PTFEVITINPDKIRDVIGKGGATIRQITEETKAAIDIEDNGTVRVFGETKAAAKAAIAKI) constitute a KH domain. The S1 motif domain maps to 624 to 692 (GKIYDGKVIR…NRGRIKLTMK (69 aa)).

It belongs to the polyribonucleotide nucleotidyltransferase family. As to quaternary structure, component of the RNA degradosome, which is a multiprotein complex involved in RNA processing and mRNA degradation. The cofactor is Mg(2+).

It localises to the cytoplasm. The catalysed reaction is RNA(n+1) + phosphate = RNA(n) + a ribonucleoside 5'-diphosphate. Its function is as follows. Involved in mRNA degradation. Catalyzes the phosphorolysis of single-stranded polyribonucleotides processively in the 3'- to 5'-direction. The sequence is that of Polyribonucleotide nucleotidyltransferase from Acinetobacter baumannii (strain AB307-0294).